A 1070-amino-acid polypeptide reads, in one-letter code: uncharacterized protein (1070 aa).

Disordered regions lie at residues 66–88 (EKEK…PGLE), 355–388 (DLDF…DFSN), 423–483 (EDDL…EQID), 667–692 (EELK…EETE), and 735–786 (SKTQ…NNNN). The span at 73-83 (NENTSNVNKIK) shows a compositional bias: low complexity. 2 stretches are compositionally biased toward basic and acidic residues: residues 435–460 (KKEE…EEYR) and 474–483 (MKMHEKEQID). Positions 475–736 (KMHEKEQIDD…EMRLQLIRSK (262 aa)) form a coiled coil. Residues 735-745 (SKTQGTSSTFI) show a composition bias toward polar residues. Residues 751-765 (KHLESLKEEKKKEVK) show a composition bias toward basic and acidic residues. The segment covering 773-786 (NNNNNNNNNNNNNN) has biased composition (low complexity).

This is an uncharacterized protein from Plasmodium falciparum (isolate 3D7).